The primary structure comprises 148 residues: Protein SprT-like (148 aa).

Positions L6–L147 constitute a SprT-like domain. H67 provides a ligand contact to Zn(2+). E68 is an active-site residue. Position 71 (H71) interacts with Zn(2+).

This sequence belongs to the SprT family. Zn(2+) is required as a cofactor.

The protein resides in the cytoplasm. This chain is Protein SprT-like, found in Lactiplantibacillus plantarum (strain ATCC BAA-793 / NCIMB 8826 / WCFS1) (Lactobacillus plantarum).